The following is a 4730-amino-acid chain: Dynein heavy chain, cytoplasmic (4730 aa).

2 disordered regions span residues 1–23 and 91–120; these read MEDQ…VVTP and TINS…QQQS. Residues 1 to 1935 form a stem region; that stretch reads MEDQQINVDS…VIHMANATFY (1935 aa). The span at 10–23 shows a compositional bias: low complexity; sequence SPTSGTNTPPVVTP. Positions 867–900 form a coiled coil; that stretch reads VRKLSTSINNFRDKVDDLIVKYSEIKKQLDGLKS. The interval 964–1016 is disordered; the sequence is EDQKDSQSTSGSSNKGGKLNRMNYSIRNKSDEENSSDLTQPQQSQQQQQTISI. Positions 969 to 978 are enriched in polar residues; it reads SQSTSGSSNK. The span at 1002–1016 shows a compositional bias: low complexity; sequence TQPQQSQQQQQTISI. 4 coiled-coil regions span residues 1204–1224, 1343–1372, 1425–1441, and 1661–1689; these read EKMN…EKLS, ALET…QALD, RKVR…LKNL, and AIER…YLER. AAA regions lie at residues 1936–2158, 2238–2531, 2635–2885, and 2978–3252; these read YGFE…VLVS, KKIQ…FTRL, EVET…WDRA, and VFYE…QGRQ. 1974–1981 contributes to the ATP binding site; that stretch reads GPAGTGKT. The stretch at 2231-2253 forms a coiled coil; that stretch reads IQMDQLRKKIQEIAKQRHLVTKQ. Position 2276-2283 (2276-2283) interacts with ATP; that stretch reads GPSGGGKT. Residues 2437–2486 form a disordered region; it reads EPFDPQEKEQQKRNENAQLQQQQQTTITSPILTSPPTTSSSSRSTTSTTS. Over residues 2441–2451 the composition is skewed to basic and acidic residues; it reads PQEKEQQKRNE. Residues 2442-2462 are a coiled coil; the sequence is QEKEQQKRNENAQLQQQQQTT. The span at 2454–2486 shows a compositional bias: low complexity; sequence QLQQQQQTTITSPILTSPPTTSSSSRSTTSTTS. ATP-binding positions include 2674-2681 and 3016-3023; these read GPPGSGKT and GVSGGGKS. 3 coiled-coil regions span residues 3271–3349, 3483–3585, and 3854–3881; these read INEK…VQLD, AQTY…NTQM, and TLET…EISE. The tract at residues 3271–3585 is stalk; it reads INEKRDQLEE…QQSENFNTQM (315 aa). AAA regions lie at residues 3638 to 3867 and 4098 to 4312; these read LSKP…EIAL and SHSF…SIDY. A disordered region spans residues 4432–4465; it reads KMQSSEEDGEDDQVSGSSKKESSSSSSEDKGKAK. Basic and acidic residues predominate over residues 4449-4463; sequence SKKESSSSSSEDKGK.

The protein belongs to the dynein heavy chain family. Consists of at least two heavy chains and a number of intermediate and light chains.

It localises to the cytoplasm. The protein resides in the cytoskeleton. Its function is as follows. Cytoplasmic dynein acts as a motor for the intracellular retrograde motility of vesicles and organelles along microtubules. Dynein has ATPase activity; the force-producing power stroke is thought to occur on release of ADP. This is Dynein heavy chain, cytoplasmic (dhcA) from Dictyostelium discoideum (Social amoeba).